A 195-amino-acid chain; its full sequence is dITP/XTP pyrophosphatase (195 aa).

9 to 14 (TGNKGK) is a substrate binding site. Mg(2+) is bound by residues Glu41 and Asp70. Asp70 (proton acceptor) is an active-site residue. Residues Ser71, 155-158 (FGYD), Lys178, and 183-184 (HR) contribute to the substrate site.

This sequence belongs to the HAM1 NTPase family. As to quaternary structure, homodimer. Requires Mg(2+) as cofactor.

It carries out the reaction XTP + H2O = XMP + diphosphate + H(+). It catalyses the reaction dITP + H2O = dIMP + diphosphate + H(+). The enzyme catalyses ITP + H2O = IMP + diphosphate + H(+). Functionally, pyrophosphatase that catalyzes the hydrolysis of nucleoside triphosphates to their monophosphate derivatives, with a high preference for the non-canonical purine nucleotides XTP (xanthosine triphosphate), dITP (deoxyinosine triphosphate) and ITP. Seems to function as a house-cleaning enzyme that removes non-canonical purine nucleotides from the nucleotide pool, thus preventing their incorporation into DNA/RNA and avoiding chromosomal lesions. This chain is dITP/XTP pyrophosphatase, found in Haemophilus influenzae (strain ATCC 51907 / DSM 11121 / KW20 / Rd).